A 121-amino-acid chain; its full sequence is Basic phospholipase A2 homolog GodMT-II (121 aa).

7 disulfides stabilise this stretch: C26–C115, C28–C44, C43–C95, C49–C121, C50–C88, C57–C81, and C75–C86. Positions 105-117 (KNYKIYPKPLCKK) are important for membrane-damaging activities in eukaryotes and bacteria; heparin-binding.

Belongs to the phospholipase A2 family. Group II subfamily. K49 sub-subfamily. As to quaternary structure, monomer. In terms of tissue distribution, expressed by the venom gland.

Its subcellular location is the secreted. Its function is as follows. Snake venom phospholipase A2 homolog that lacks enzymatic activity but shows high myotoxic activities. In vivo, induces a mild edema when subcutaneously injected into mice foot pad. The chain is Basic phospholipase A2 homolog GodMT-II from Cerrophidion godmani (Porthidium godmani).